The chain runs to 231 residues: Orotate phosphoribosyltransferase (231 aa).

5-phospho-alpha-D-ribose 1-diphosphate is bound by residues lysine 27, 79 to 80, arginine 106, lysine 107, lysine 110, histidine 112, and 133 to 141; these read YK and DDVMTAGTA. Residues threonine 137 and arginine 166 each coordinate orotate.

It belongs to the purine/pyrimidine phosphoribosyltransferase family. PyrE subfamily. In terms of assembly, homodimer. Requires Mg(2+) as cofactor.

It carries out the reaction orotidine 5'-phosphate + diphosphate = orotate + 5-phospho-alpha-D-ribose 1-diphosphate. It participates in pyrimidine metabolism; UMP biosynthesis via de novo pathway; UMP from orotate: step 1/2. Catalyzes the transfer of a ribosyl phosphate group from 5-phosphoribose 1-diphosphate to orotate, leading to the formation of orotidine monophosphate (OMP). This Bifidobacterium longum (strain NCC 2705) protein is Orotate phosphoribosyltransferase.